The chain runs to 227 residues: Cytochrome c oxidase subunit 2 (227 aa).

The Mitochondrial intermembrane segment spans residues 1 to 14 (MAYPFQMGLQDATS). A helical transmembrane segment spans residues 15 to 45 (PIMEELLHFHDHTLMIVFLISSLVLYIISLM). Topologically, residues 46–59 (LTTKLTHTSTMDAQ) are mitochondrial matrix. A helical membrane pass occupies residues 60-87 (EVETIWTILPAIILILIALPSLRILYMM). Residues 88-227 (DEINNPSLTV…HFEKWSASLL (140 aa)) are Mitochondrial intermembrane-facing. Residues His161, Cys196, Glu198, Cys200, His204, and Met207 each coordinate Cu cation. Glu198 contributes to the Mg(2+) binding site.

Belongs to the cytochrome c oxidase subunit 2 family. As to quaternary structure, component of the cytochrome c oxidase (complex IV, CIV), a multisubunit enzyme composed of 14 subunits. The complex is composed of a catalytic core of 3 subunits MT-CO1, MT-CO2 and MT-CO3, encoded in the mitochondrial DNA, and 11 supernumerary subunits COX4I, COX5A, COX5B, COX6A, COX6B, COX6C, COX7A, COX7B, COX7C, COX8 and NDUFA4, which are encoded in the nuclear genome. The complex exists as a monomer or a dimer and forms supercomplexes (SCs) in the inner mitochondrial membrane with NADH-ubiquinone oxidoreductase (complex I, CI) and ubiquinol-cytochrome c oxidoreductase (cytochrome b-c1 complex, complex III, CIII), resulting in different assemblies (supercomplex SCI(1)III(2)IV(1) and megacomplex MCI(2)III(2)IV(2)). Found in a complex with TMEM177, COA6, COX18, COX20, SCO1 and SCO2. Interacts with TMEM177 in a COX20-dependent manner. Interacts with COX20. Interacts with COX16. Cu cation serves as cofactor.

It localises to the mitochondrion inner membrane. The catalysed reaction is 4 Fe(II)-[cytochrome c] + O2 + 8 H(+)(in) = 4 Fe(III)-[cytochrome c] + 2 H2O + 4 H(+)(out). Its function is as follows. Component of the cytochrome c oxidase, the last enzyme in the mitochondrial electron transport chain which drives oxidative phosphorylation. The respiratory chain contains 3 multisubunit complexes succinate dehydrogenase (complex II, CII), ubiquinol-cytochrome c oxidoreductase (cytochrome b-c1 complex, complex III, CIII) and cytochrome c oxidase (complex IV, CIV), that cooperate to transfer electrons derived from NADH and succinate to molecular oxygen, creating an electrochemical gradient over the inner membrane that drives transmembrane transport and the ATP synthase. Cytochrome c oxidase is the component of the respiratory chain that catalyzes the reduction of oxygen to water. Electrons originating from reduced cytochrome c in the intermembrane space (IMS) are transferred via the dinuclear copper A center (CU(A)) of subunit 2 and heme A of subunit 1 to the active site in subunit 1, a binuclear center (BNC) formed by heme A3 and copper B (CU(B)). The BNC reduces molecular oxygen to 2 water molecules using 4 electrons from cytochrome c in the IMS and 4 protons from the mitochondrial matrix. The sequence is that of Cytochrome c oxidase subunit 2 (MT-CO2) from Ailurus fulgens (Himalayan red panda).